The chain runs to 101 residues: Interleukin-8 (101 aa).

The signal sequence occupies residues 1–22 (MPSQLRVAVLAAFLLSAVLCEG). Intrachain disulfides connect cysteine 34/cysteine 61 and cysteine 36/cysteine 77.

Belongs to the intercrine alpha (chemokine CxC) family. In terms of assembly, homodimer. Interacts with TNFAIP6 (via Link domain); this interaction interferes with chemokine binding to glycosaminoglycans.

The protein resides in the secreted. Chemotactic factor that mediates inflammatory response by attracting neutrophils, basophils, and T-cells to clear pathogens and protect the host from infection. Also plays an important role in neutrophil activation. Released in response to an inflammatory stimulus, exerts its effect by binding to the G-protein-coupled receptors CXCR1 and CXCR2, primarily found in neutrophils, monocytes and endothelial cells. G-protein heterotrimer (alpha, beta, gamma subunits) constitutively binds to CXCR1/CXCR2 receptor and activation by IL8 leads to beta and gamma subunits release from Galpha (GNAI2 in neutrophils) and activation of several downstream signaling pathways including PI3K and MAPK pathways. This chain is Interleukin-8 (CXCL8), found in Cavia porcellus (Guinea pig).